Reading from the N-terminus, the 172-residue chain is 3-hydroxydecanoyl-[acyl-carrier-protein] dehydratase (172 aa).

Histidine 71 is a catalytic residue.

Belongs to the thioester dehydratase family. FabA subfamily. As to quaternary structure, homodimer.

The protein resides in the cytoplasm. The enzyme catalyses a (3R)-hydroxyacyl-[ACP] = a (2E)-enoyl-[ACP] + H2O. It carries out the reaction (3R)-hydroxydecanoyl-[ACP] = (2E)-decenoyl-[ACP] + H2O. The catalysed reaction is (2E)-decenoyl-[ACP] = (3Z)-decenoyl-[ACP]. It functions in the pathway lipid metabolism; fatty acid biosynthesis. Functionally, necessary for the introduction of cis unsaturation into fatty acids. Catalyzes the dehydration of (3R)-3-hydroxydecanoyl-ACP to E-(2)-decenoyl-ACP and then its isomerization to Z-(3)-decenoyl-ACP. Can catalyze the dehydratase reaction for beta-hydroxyacyl-ACPs with saturated chain lengths up to 16:0, being most active on intermediate chain length. The polypeptide is 3-hydroxydecanoyl-[acyl-carrier-protein] dehydratase (Escherichia fergusonii (strain ATCC 35469 / DSM 13698 / CCUG 18766 / IAM 14443 / JCM 21226 / LMG 7866 / NBRC 102419 / NCTC 12128 / CDC 0568-73)).